Here is a 199-residue protein sequence, read N- to C-terminus: uncharacterized protein (199 aa).

The interval 1–48 (MSANEFYSSGQQGQYNQQNNQERTGAPNNGQYGADNGNPNGERGLFST) is disordered. Ser2 carries the post-translational modification N-acetylserine. The segment covering 7-21 (YSSGQQGQYNQQNNQ) has biased composition (low complexity). Residues 22 to 31 (ERTGAPNNGQ) show a composition bias toward polar residues. A phosphoserine mark is found at Ser53 and Ser70. The tract at residues 89–199 (RKEHKQQEQY…RQGFNGGSRW (111 aa)) is disordered. Composition is skewed to gly residues over residues 124-163 (GGFG…GFGG), 170-179 (GGPGGQGFGG), and 186-199 (GGQG…GSRW).

It localises to the mitochondrion. This is an uncharacterized protein from Saccharomyces cerevisiae (strain ATCC 204508 / S288c) (Baker's yeast).